The primary structure comprises 252 residues: MIEWSDRGIVLAARPHGEDGVIVSLLSAGHGRHSGIVRGGRGKRLRAALQPGSLVQATWKARLEDHLGSLVVELLAGVAGGLLDDRDRLAALAAACALAETVLPERAPQADVYDATLALLDALAEGGEGTPLVWAGAFVRWEIGLLAALGFGLDLSCCAVSGECGDLAYVSPRSGRAVGREAGAPWQARLLALPAFLLSPAEVPANAQAVGDGLRLSGYFLEGHVLAPQGRGLPASRQRFVERLRRWSAADR.

Belongs to the RecO family.

Involved in DNA repair and RecF pathway recombination. The sequence is that of DNA repair protein RecO from Rhodospirillum rubrum (strain ATCC 11170 / ATH 1.1.1 / DSM 467 / LMG 4362 / NCIMB 8255 / S1).